The chain runs to 153 residues: Gastric inhibitory polypeptide (153 aa).

The signal sequence occupies residues 1 to 21; the sequence is MVATKTFALLLLSLFLAVGLG. 2 propeptides span residues 22–50 and 95–153; these read EKKEGHFSALPSLPVGSHAKVSSPQPRGP and EARA…LRSR. Residues 102-125 are disordered; it reads ASQANRKEEEAVEPQSSPAKNPSD.

Belongs to the glucagon family.

It localises to the secreted. In terms of biological role, potent stimulator of insulin secretion and relatively poor inhibitor of gastric acid secretion. In Homo sapiens (Human), this protein is Gastric inhibitory polypeptide (GIP).